A 391-amino-acid polypeptide reads, in one-letter code: Casein kinase II subunit alpha (391 aa).

The interaction with beta subunit stretch occupies residues 36-41 (QDDYQL). The Protein kinase domain occupies 39 to 324 (YQLVRKLGRG…AREAMEHPYF (286 aa)). Residues 45 to 53 (LGRGKYSEV) and Lys-68 contribute to the ATP site. Asp-156 (proton acceptor) is an active-site residue. Thr-344 and Thr-360 each carry phosphothreonine; by CDK1. Phosphoserine; by CDK1 occurs at positions 362 and 370.

The protein belongs to the protein kinase superfamily. Ser/Thr protein kinase family. CK2 subfamily. As to quaternary structure, heterotetramer composed of two catalytic subunits (alpha chain and/or alpha' chain) and two regulatory subunits (beta chains). The tetramer can exist as a combination of 2 alpha/2 beta, 2 alpha'/2 beta or 1 alpha/1 alpha'/2 beta subunits. Also part of a CK2-SPT16-SSRP1 complex composed of SSRP1, SUPT16H, CSNK2A1, CSNK2A2 and CSNK2B, which forms following UV irradiation. Interacts with RNPS1. Interacts with SNAI1. Interacts with PML. Interacts with CCAR2. Interacts with HIRIP3. Phosphorylated at Thr-344, Thr-360, Ser-362 and Ser-370 by CDK1 in prophase and metaphase and dephosphorylated during anaphase. Phosphorylation does not directly affect casein kinase 2 activity, but may contribute to its regulation by forming binding sites for interacting proteins and/or targeting it to different compartments.

The protein resides in the nucleus. It catalyses the reaction L-seryl-[protein] + ATP = O-phospho-L-seryl-[protein] + ADP + H(+). It carries out the reaction L-threonyl-[protein] + ATP = O-phospho-L-threonyl-[protein] + ADP + H(+). Its activity is regulated as follows. Constitutively active protein kinase whose activity is not directly affected by phosphorylation. Seems to be regulated by level of expression and localization. Its function is as follows. Catalytic subunit of a constitutively active serine/threonine-protein kinase complex that phosphorylates a large number of substrates containing acidic residues C-terminal to the phosphorylated serine or threonine. Regulates numerous cellular processes, such as cell cycle progression, apoptosis and transcription, as well as viral infection. May act as a regulatory node which integrates and coordinates numerous signals leading to an appropriate cellular response. During mitosis, functions as a component of the p53/TP53-dependent spindle assembly checkpoint (SAC) that maintains cyclin-B-CDK1 activity and G2 arrest in response to spindle damage. Also required for p53/TP53-mediated apoptosis, phosphorylating 'Ser-392' of p53/TP53 following UV irradiation. Phosphorylates a number of DNA repair proteins in response to DNA damage, such as MDC1, MRE11, RAD9A, RAD51 and HTATSF1, promoting their recruitment to DNA damage sites. Can also negatively regulate apoptosis. Phosphorylates the caspases CASP9 and CASP2 and the apoptotic regulator NOL3. Phosphorylation protects CASP9 from cleavage and activation by CASP8, and inhibits the dimerization of CASP2 and activation of CASP8. Phosphorylates YY1, protecting YY1 from cleavage by CASP7 during apoptosis. Regulates transcription by direct phosphorylation of RNA polymerases I, II, III and IV. Also phosphorylates and regulates numerous transcription factors including NF-kappa-B, STAT1, CREB1, IRF1, IRF2, ATF1, ATF4, SRF, MAX, JUN, FOS, MYC and MYB. Phosphorylates Hsp90 and its co-chaperones FKBP4 and CDC37, which is essential for chaperone function. Mediates sequential phosphorylation of FNIP1, promoting its gradual interaction with Hsp90, leading to activate both kinase and non-kinase client proteins of Hsp90. Regulates Wnt signaling by phosphorylating CTNNB1 and the transcription factor LEF1. Acts as an ectokinase that phosphorylates several extracellular proteins. Plays an important role in the circadian clock function by phosphorylating BMAL1 at 'Ser-90' which is pivotal for its interaction with CLOCK and which controls CLOCK nuclear entry. Phosphorylates FMR1, promoting FMR1-dependent formation of a membraneless compartment. May phosphorylate histone H2A on 'Ser-1'. The chain is Casein kinase II subunit alpha (CSNK2A1) from Bos taurus (Bovine).